The chain runs to 154 residues: SsrA-binding protein (154 aa).

A disordered region spans residues 130–154; it reads KLHDKRETERRRQDQRDIQRAIKRA. Residues 133-154 are compositionally biased toward basic and acidic residues; it reads DKRETERRRQDQRDIQRAIKRA.

The protein belongs to the SmpB family.

The protein resides in the cytoplasm. Its function is as follows. Required for rescue of stalled ribosomes mediated by trans-translation. Binds to transfer-messenger RNA (tmRNA), required for stable association of tmRNA with ribosomes. tmRNA and SmpB together mimic tRNA shape, replacing the anticodon stem-loop with SmpB. tmRNA is encoded by the ssrA gene; the 2 termini fold to resemble tRNA(Ala) and it encodes a 'tag peptide', a short internal open reading frame. During trans-translation Ala-aminoacylated tmRNA acts like a tRNA, entering the A-site of stalled ribosomes, displacing the stalled mRNA. The ribosome then switches to translate the ORF on the tmRNA; the nascent peptide is terminated with the 'tag peptide' encoded by the tmRNA and targeted for degradation. The ribosome is freed to recommence translation, which seems to be the essential function of trans-translation. The polypeptide is SsrA-binding protein (Synechococcus elongatus (strain ATCC 33912 / PCC 7942 / FACHB-805) (Anacystis nidulans R2)).